The chain runs to 2812 residues: Polyunsaturated fatty acid synthase subunit A (2812 aa).

The region spanning 12–472 is the Ketosynthase family 3 (KS3) domain; that stretch reads DTRIAVIGMS…GANYHAVLEE (461 aa). Catalysis depends on for beta-ketoacyl synthase activity residues C213, H348, and H390. In terms of domain architecture, Malonyl-CoA:ACP transacylase (MAT) spans 602–913; the sequence is LFSGQGAQYT…TVSVNPASGK (312 aa). Residues 1000-1048 are a coiled coil; it reads DEEAKREAARLQKQLEDAQRQLDEAKRAADEANQKLAAAKEEAKSAAAS. 3 consecutive Carrier domains span residues 1114–1193, 1232–1308, and 1342–1418; these read ALLA…KAEI, ERAE…KAEI, and AKAE…KAEI. S1152, S1267, and S1377 each carry O-(pantetheine 4'-phosphoryl)serine. Residues 1422–1442 form a disordered region; that stretch reads SAPAPAAAAPAPAAPAPAAAA. Residues 1423-1442 are compositionally biased toward low complexity; it reads APAPAAAAPAPAAPAPAAAA. One can recognise a Carrier 4 domain in the interval 1455–1531; sequence AKAETVVMEV…EVVDAMKAEI (77 aa). An O-(pantetheine 4'-phosphoryl)serine modification is found at S1490. The segment at 1535 to 1555 is disordered; that stretch reads SAPAPAAAAPAPAAPAPAAAA. Residues 1536-1555 are compositionally biased toward low complexity; that stretch reads APAPAAAAPAPAAPAPAAAA. Carrier domains are found at residues 1568–1644, 1681–1757, 1792–1868, and 1903–1979; these read AKAE…KAEI. Residues S1603, S1716, S1827, and S1938 each carry the O-(pantetheine 4'-phosphoryl)serine modification. Positions 2257 to 2484 constitute a Ketoreductase (KR) domain; the sequence is VVSGGARGIT…VKSICFGPWD (228 aa). An N-terminal hotdog fold region spans residues 2524-2651; sequence EILVGNWRTP…RAVVVLSSQG (128 aa). Residues 2524-2812 form the PKS/mFAS DH domain; sequence EILVGNWRTP…SVIATDSLAF (289 aa). Residues 2540 to 2800 form a dehydratase (DH) domain region; sequence ETITLHRKIS…NEQGDLFIDV (261 aa). The active-site Proton acceptor; for dehydratase activity is the H2559. The interval 2666–2812 is C-terminal hotdog fold; the sequence is ADPAAQSAVY…SVIATDSLAF (147 aa). The active-site Proton donor; for dehydratase activity is the D2730.

In terms of assembly, component of the polyunsaturated fatty acid synthase complex composed of at least ORF-A, ORF-B and ORF-C. Requires pantetheine 4'-phosphate as cofactor.

It functions in the pathway lipid metabolism; fatty acid biosynthesis. Functionally, poliketide synthase-like protein; part of the polyunsaturated fatty acid synthase composed of the 3 PKS-like subunits A, B and C. While the saturated fatty acids (SFAs) in Thraustochytrium are produced by the conventional fatty acid synthase (FAS) pathway, polyunsaturated fatty acids (PUFAs) including docosahexeanoic acid (DHA) and docosapentaenoic acid (DPA) are synthesized via an anaerobical PKS pathway. PUFA synthase assimilates fatty acyl-CoA, the product of FAS, as the starter unit to synthesize DPA, and this starter unit may be butyryl-CoA, hexanoyl-CoA, or octanoyl-CoA. DPA and DHA biosynthesis seem to differ by the reduction at the N-3 position by PUFA synthase, not the extension of carbon chain. In DHA biosynthesis, PUFA synthase extends the fatty acyl chain from the methyl toward the carboxyl end, and the double bond is formed when the carbon chain is growing, instead of afterward. Therefore, PUFA synthase is unable to transform DPA to DHA, suggesting that DPA is not the precursor of DHA. Moreover, DPA molecule is partly extended by FAS KS domain, so DPA biosynthesis is less dependent on PUFA synthase KS domain than DHA. The sequence is that of Polyunsaturated fatty acid synthase subunit A from Thraustochytrium sp. (strain ATCC 26185 / S-3).